The chain runs to 304 residues: GTPase Era (304 aa).

One can recognise an Era-type G domain in the interval 9 to 177 (HSGFVAIVGR…VTTLSQHMPE (169 aa)). Positions 17–24 (GRPNVGKS) are G1. A GTP-binding site is contributed by 17–24 (GRPNVGKS). Residues 43–47 (QTTRN) form a G2 region. Residues 64 to 67 (DTPG) form a G3 region. GTP-binding positions include 64–68 (DTPGI) and 127–130 (NKID). The G4 stretch occupies residues 127–130 (NKID). The interval 156–158 (ISA) is G5. In terms of domain architecture, KH type-2 spans 208 to 285 (TRQEVPHSVA…YLELWVKVSE (78 aa)).

It belongs to the TRAFAC class TrmE-Era-EngA-EngB-Septin-like GTPase superfamily. Era GTPase family. Monomer.

It localises to the cytoplasm. The protein resides in the cell membrane. Functionally, an essential GTPase that binds both GDP and GTP, with rapid nucleotide exchange. Plays a role in 16S rRNA processing and 30S ribosomal subunit biogenesis and possibly also in cell cycle regulation and energy metabolism. The protein is GTPase Era of Pediococcus pentosaceus (strain ATCC 25745 / CCUG 21536 / LMG 10740 / 183-1w).